Here is a 366-residue protein sequence, read N- to C-terminus: Phospho-N-acetylmuramoyl-pentapeptide-transferase (366 aa).

The next 10 helical transmembrane spans lie at alanine 27–leucine 47, threonine 71–alanine 91, leucine 93–phenylalanine 113, phenylalanine 138–alanine 158, phenylalanine 174–glycine 194, glycine 205–alanine 225, leucine 245–proline 265, alanine 268–valine 288, isoleucine 294–valine 314, and glutamine 343–leucine 363.

The protein belongs to the glycosyltransferase 4 family. MraY subfamily. Requires Mg(2+) as cofactor.

Its subcellular location is the cell inner membrane. The enzyme catalyses UDP-N-acetyl-alpha-D-muramoyl-L-alanyl-gamma-D-glutamyl-meso-2,6-diaminopimeloyl-D-alanyl-D-alanine + di-trans,octa-cis-undecaprenyl phosphate = di-trans,octa-cis-undecaprenyl diphospho-N-acetyl-alpha-D-muramoyl-L-alanyl-D-glutamyl-meso-2,6-diaminopimeloyl-D-alanyl-D-alanine + UMP. The protein operates within cell wall biogenesis; peptidoglycan biosynthesis. In terms of biological role, catalyzes the initial step of the lipid cycle reactions in the biosynthesis of the cell wall peptidoglycan: transfers peptidoglycan precursor phospho-MurNAc-pentapeptide from UDP-MurNAc-pentapeptide onto the lipid carrier undecaprenyl phosphate, yielding undecaprenyl-pyrophosphoryl-MurNAc-pentapeptide, known as lipid I. The protein is Phospho-N-acetylmuramoyl-pentapeptide-transferase of Rhizobium johnstonii (strain DSM 114642 / LMG 32736 / 3841) (Rhizobium leguminosarum bv. viciae).